A 456-amino-acid polypeptide reads, in one-letter code: Gamma-glutamyl phosphate reductase (456 aa).

S2 bears the N-acetylserine mark.

The protein belongs to the gamma-glutamyl phosphate reductase family.

The catalysed reaction is L-glutamate 5-semialdehyde + phosphate + NADP(+) = L-glutamyl 5-phosphate + NADPH + H(+). The protein operates within amino-acid biosynthesis; L-proline biosynthesis; L-glutamate 5-semialdehyde from L-glutamate: step 2/2. Its function is as follows. Catalyzes the NADPH dependent reduction of L-gamma-glutamyl 5-phosphate into L-glutamate 5-semialdehyde and phosphate. The product spontaneously undergoes cyclization to form 1-pyrroline-5-carboxylate. The protein is Gamma-glutamyl phosphate reductase (PRO2) of Saccharomyces cerevisiae (strain ATCC 204508 / S288c) (Baker's yeast).